The primary structure comprises 484 residues: RNA polymerase sigma-54 factor 1 (484 aa).

Residues 355 to 374 (NLKAVAEAIQMHESTVSRVT) constitute a DNA-binding region (H-T-H motif). The RPON box signature appears at 444–452 (ARRTVAKYR). The interval 464–484 (RRDNMWSTMNSRASGGTGLDK) is disordered. Positions 468 to 477 (MWSTMNSRAS) are enriched in polar residues.

It belongs to the sigma-54 factor family.

In terms of biological role, sigma factors are initiation factors that promote the attachment of RNA polymerase to specific initiation sites and are then released. This sigma factor is responsible for the expression of the nitrogen fixation genes. The protein is RNA polymerase sigma-54 factor 1 (rpoN1) of Bradyrhizobium diazoefficiens (strain JCM 10833 / BCRC 13528 / IAM 13628 / NBRC 14792 / USDA 110).